A 365-amino-acid polypeptide reads, in one-letter code: Cytosolic 5'-nucleotidase 1A (365 aa).

Over residues 1–11 the composition is skewed to basic and acidic residues; that stretch reads MEPGQPREARE. A disordered region spans residues 1–23; that stretch reads MEPGQPREAREPGPGAETAAVPR. D208 serves as the catalytic Nucleophile.

The protein belongs to the 5'-nucleotidase type 3 family. The cofactor is Mg(2+).

It localises to the cytoplasm. It catalyses the reaction a ribonucleoside 5'-phosphate + H2O = a ribonucleoside + phosphate. The catalysed reaction is a 2'-deoxyribonucleoside 5'-phosphate + H2O = a 2'-deoxyribonucleoside + phosphate. It carries out the reaction IMP + H2O = inosine + phosphate. The enzyme catalyses AMP + H2O = adenosine + phosphate. It catalyses the reaction dCMP + H2O = 2'-deoxycytidine + phosphate. Activated by ADP. Functionally, catalyzes the hydrolysis of ribonucleotide and deoxyribonucleotide monophosphates, releasing inorganic phosphate and the corresponding nucleoside. AMP is the major substrate but can also hydrolyze dCMP and IMP. In Mus musculus (Mouse), this protein is Cytosolic 5'-nucleotidase 1A (Nt5c1a).